The primary structure comprises 129 residues: Flagellar assembly factor FliW (129 aa).

Belongs to the FliW family. Interacts with translational regulator CsrA and flagellin(s).

It is found in the cytoplasm. Functionally, acts as an anti-CsrA protein, binds CsrA and prevents it from repressing translation of its target genes, one of which is flagellin. Binds to flagellin and participates in the assembly of the flagellum. The protein is Flagellar assembly factor FliW of Campylobacter jejuni subsp. doylei (strain ATCC BAA-1458 / RM4099 / 269.97).